The chain runs to 250 residues: Triosephosphate isomerase (250 aa).

9–11 (NWK) provides a ligand contact to substrate. The active-site Electrophile is His96. Glu166 functions as the Proton acceptor in the catalytic mechanism. Residues Gly172, Ser212, and 233–234 (GG) each bind substrate.

The protein belongs to the triosephosphate isomerase family. In terms of assembly, homodimer.

It localises to the cytoplasm. The catalysed reaction is D-glyceraldehyde 3-phosphate = dihydroxyacetone phosphate. It functions in the pathway carbohydrate biosynthesis; gluconeogenesis. The protein operates within carbohydrate degradation; glycolysis; D-glyceraldehyde 3-phosphate from glycerone phosphate: step 1/1. Functionally, involved in the gluconeogenesis. Catalyzes stereospecifically the conversion of dihydroxyacetone phosphate (DHAP) to D-glyceraldehyde-3-phosphate (G3P). The sequence is that of Triosephosphate isomerase from Chlorobium luteolum (strain DSM 273 / BCRC 81028 / 2530) (Pelodictyon luteolum).